Here is a 236-residue protein sequence, read N- to C-terminus: Purine nucleoside phosphorylase DeoD-type (236 aa).

Histidine 4 provides a ligand contact to a purine D-ribonucleoside. Phosphate is bound by residues glycine 20, arginine 24, arginine 43, and 87–90; that span reads RVGS. Residues 179 to 181 and 203 to 204 each bind a purine D-ribonucleoside; these read EME and SD. The active-site Proton donor is aspartate 204.

Belongs to the PNP/UDP phosphorylase family. Homohexamer; trimer of homodimers.

It catalyses the reaction a purine D-ribonucleoside + phosphate = a purine nucleobase + alpha-D-ribose 1-phosphate. The catalysed reaction is a purine 2'-deoxy-D-ribonucleoside + phosphate = a purine nucleobase + 2-deoxy-alpha-D-ribose 1-phosphate. Functionally, catalyzes the reversible phosphorolytic breakdown of the N-glycosidic bond in the beta-(deoxy)ribonucleoside molecules, with the formation of the corresponding free purine bases and pentose-1-phosphate. This is Purine nucleoside phosphorylase DeoD-type from Limosilactobacillus reuteri (strain DSM 20016) (Lactobacillus reuteri).